We begin with the raw amino-acid sequence, 1141 residues long: DNA-directed RNA polymerase subunit beta (1141 aa).

This sequence belongs to the RNA polymerase beta chain family. As to quaternary structure, the RNAP catalytic core consists of 2 alpha, 1 beta, 1 beta' and 1 omega subunit. When a sigma factor is associated with the core the holoenzyme is formed, which can initiate transcription.

It catalyses the reaction RNA(n) + a ribonucleoside 5'-triphosphate = RNA(n+1) + diphosphate. In terms of biological role, DNA-dependent RNA polymerase catalyzes the transcription of DNA into RNA using the four ribonucleoside triphosphates as substrates. This chain is DNA-directed RNA polymerase subunit beta, found in Frankia casuarinae (strain DSM 45818 / CECT 9043 / HFP020203 / CcI3).